Consider the following 472-residue polypeptide: Arabinose-proton symporter (472 aa).

Residues 1-29 (MVTINTESALTPRSLRDTRRMNMFVSVAA) are Cytoplasmic-facing. The helical transmembrane segment at 30–50 (AVAGLLFGLDIGVIAGALPFI) threads the bilayer. Residues 51-63 (TDHFVLTSRLQEW) are Periplasmic-facing. Residues 64-84 (VVSSMMLGAAIGALFNGWLSF) traverse the membrane as a helical segment. Residues 85–91 (RLGRKYS) lie on the Cytoplasmic side of the membrane. The helical transmembrane segment at 92–112 (LMAGAILFVLGSIGSAFATSV) threads the bilayer. At 113-114 (EM) the chain is on the periplasmic side. A helical transmembrane segment spans residues 115–135 (LIAARVVLGIAVGIASYTAPL). At 136–154 (YLSEMASENVRGKMISMYQ) the chain is on the cytoplasmic side. Residues 155 to 175 (LMVTLGIVLAFLSDTAFSYSG) form a helical membrane-spanning segment. The Periplasmic portion of the chain corresponds to 176-178 (NWR). Residues 179-199 (AMLGVLALPAVLLIILVVFLP) form a helical membrane-spanning segment. Over 200–257 (NSPRWLAEKGRHIEAEEVLRMLRDTSEKAREELNEIRESLKLKQGGWALFKINRNVRR) the chain is Cytoplasmic. Residues 258–278 (AVFLGMLLQAMQQFTGMNIIM) traverse the membrane as a helical segment. Residues 279-297 (YYAPRIFKMAGFTTTEQQM) lie on the Periplasmic side of the membrane. A helical membrane pass occupies residues 298–318 (IATLVVGLTFMFATFIAVFTV). Topologically, residues 319–325 (DKAGRKP) are cytoplasmic. The chain crosses the membrane as a helical span at residues 326–346 (ALKIGFSVMALGTLVLGYCLM). At 347 to 361 (QFDNGTASSGLSWLS) the chain is on the periplasmic side. A helical membrane pass occupies residues 362–382 (VGMTMMCIAGYAMSAAPVVWI). Residues 383–404 (LCSEIQPLKCRDFGITCSTTTN) are Cytoplasmic-facing. 2 consecutive transmembrane segments (helical) span residues 405–425 (WVSNMIIGATFLTLLDSIGAA) and 426–446 (GTFWLYTALNIAFVGITFWLI). Residues 447 to 472 (PETKNVTLEHIERKLMAGEKLRNIGV) are Cytoplasmic-facing.

Belongs to the major facilitator superfamily. Sugar transporter (TC 2.A.1.1) family.

Its subcellular location is the cell inner membrane. It catalyses the reaction L-arabinose(in) + H(+)(in) = L-arabinose(out) + H(+)(out). Uptake of L-arabinose across the cytoplasmic membrane with the concomitant transport of protons into the cell (symport system). In Escherichia coli O157:H7, this protein is Arabinose-proton symporter (araE).